Consider the following 85-residue polypeptide: Neurotoxin beta-KTx 17 (85 aa).

The signal sequence occupies residues 1-20; sequence MKQYIFFLALIVLVSTFAEA. Positions 21 to 37 are excised as a propeptide; it reads GKKTEILDKVKKVFSKG. The BetaSPN-type CS-alpha/beta domain maps to 49-85; sequence ELGCPFIEKWCEDHCESKKQVGKCENFDCSCVKLGGK. Intrachain disulfides connect Cys-52–Cys-72, Cys-59–Cys-77, and Cys-63–Cys-79.

Belongs to the long chain scorpion toxin family. Class 2 subfamily. Expressed by the venom gland.

It localises to the secreted. Has a very weak effect to block voltage-gated potassium channel Kv1.1/KCNA1. This Lychas mucronatus (Chinese swimming scorpion) protein is Neurotoxin beta-KTx 17.